Reading from the N-terminus, the 379-residue chain is Lipid-A-disaccharide synthase (379 aa).

It belongs to the LpxB family.

The enzyme catalyses a lipid X + a UDP-2-N,3-O-bis[(3R)-3-hydroxyacyl]-alpha-D-glucosamine = a lipid A disaccharide + UDP + H(+). The protein operates within bacterial outer membrane biogenesis; LPS lipid A biosynthesis. In terms of biological role, condensation of UDP-2,3-diacylglucosamine and 2,3-diacylglucosamine-1-phosphate to form lipid A disaccharide, a precursor of lipid A, a phosphorylated glycolipid that anchors the lipopolysaccharide to the outer membrane of the cell. The chain is Lipid-A-disaccharide synthase from Pseudomonas fluorescens (strain SBW25).